Consider the following 380-residue polypeptide: Cytochrome b (380 aa).

The next 4 helical transmembrane spans lie at 34–54 (FGSLLGICLMTQILTGLLLAM), 78–99 (WLIRNLHANGASFFFICIYLHI), 114–134 (WNTGVMLLLTLMATAFVGYVL), and 179–199 (FFALHFLLPFVIAGLTLIHLT). Heme b-binding residues include histidine 84 and histidine 98. Heme b-binding residues include histidine 183 and histidine 197. An a ubiquinone-binding site is contributed by histidine 202. 4 consecutive transmembrane segments (helical) span residues 227–247 (LKDILGFMFMLLPLTTLALFS), 289–309 (LGGVLALAASVLILFLVPFLH), 321–341 (LSQLLFWVLVANLLILTWVGS), and 348–368 (FIIIGQLASLTYFTILLILFP).

It belongs to the cytochrome b family. The cytochrome bc1 complex contains 11 subunits: 3 respiratory subunits (MT-CYB, CYC1 and UQCRFS1), 2 core proteins (UQCRC1 and UQCRC2) and 6 low-molecular weight proteins (UQCRH/QCR6, UQCRB/QCR7, UQCRQ/QCR8, UQCR10/QCR9, UQCR11/QCR10 and a cleavage product of UQCRFS1). This cytochrome bc1 complex then forms a dimer. It depends on heme b as a cofactor.

The protein resides in the mitochondrion inner membrane. Component of the ubiquinol-cytochrome c reductase complex (complex III or cytochrome b-c1 complex) that is part of the mitochondrial respiratory chain. The b-c1 complex mediates electron transfer from ubiquinol to cytochrome c. Contributes to the generation of a proton gradient across the mitochondrial membrane that is then used for ATP synthesis. The chain is Cytochrome b (MT-CYB) from Pterodroma hypoleuca (Bonin petrel).